Reading from the N-terminus, the 428-residue chain is 3-phosphoshikimate 1-carboxyvinyltransferase (428 aa).

3-phosphoshikimate contacts are provided by lysine 22, serine 23, and arginine 27. A phosphoenolpyruvate-binding site is contributed by lysine 22. Phosphoenolpyruvate-binding residues include glycine 95 and arginine 123. Residues serine 170, serine 171, glutamine 172, serine 197, aspartate 316, and lysine 343 each contribute to the 3-phosphoshikimate site. Residue glutamine 172 coordinates phosphoenolpyruvate. The active-site Proton acceptor is the aspartate 316. 3 residues coordinate phosphoenolpyruvate: arginine 347, arginine 390, and lysine 414.

The protein belongs to the EPSP synthase family. Monomer.

Its subcellular location is the cytoplasm. It carries out the reaction 3-phosphoshikimate + phosphoenolpyruvate = 5-O-(1-carboxyvinyl)-3-phosphoshikimate + phosphate. The protein operates within metabolic intermediate biosynthesis; chorismate biosynthesis; chorismate from D-erythrose 4-phosphate and phosphoenolpyruvate: step 6/7. Functionally, catalyzes the transfer of the enolpyruvyl moiety of phosphoenolpyruvate (PEP) to the 5-hydroxyl of shikimate-3-phosphate (S3P) to produce enolpyruvyl shikimate-3-phosphate and inorganic phosphate. This is 3-phosphoshikimate 1-carboxyvinyltransferase from Laribacter hongkongensis (strain HLHK9).